We begin with the raw amino-acid sequence, 274 residues long: 2,3,4,5-tetrahydropyridine-2,6-dicarboxylate N-succinyltransferase (274 aa).

2 residues coordinate substrate: arginine 104 and aspartate 141.

This sequence belongs to the transferase hexapeptide repeat family. Homotrimer.

Its subcellular location is the cytoplasm. It carries out the reaction (S)-2,3,4,5-tetrahydrodipicolinate + succinyl-CoA + H2O = (S)-2-succinylamino-6-oxoheptanedioate + CoA. Its pathway is amino-acid biosynthesis; L-lysine biosynthesis via DAP pathway; LL-2,6-diaminopimelate from (S)-tetrahydrodipicolinate (succinylase route): step 1/3. This chain is 2,3,4,5-tetrahydropyridine-2,6-dicarboxylate N-succinyltransferase, found in Shewanella sediminis (strain HAW-EB3).